The sequence spans 887 residues: PAN2-PAN3 deadenylation complex subunit Pan3 (887 aa).

The segment at 49–77 (GVKLKYCRYYAKDKTCFYGEECQFLHEDP) adopts a C3H1-type zinc-finger fold. Disordered stretches follow at residues 111-139 (GGGAGPPAGPKKPELGVPGAATAGGGLDG), 280-307 (ENNLQTPNPTASEFIPKGGSTSRLSNVS), and 321-393 (PSMG…GQVI). A necessary and sufficient for interaction with PABPC1 but not needed for interaction with PAN2 region spans residues 147 to 498 (MDGGALTDAS…PPPNRIQKSS (352 aa)). Composition is skewed to polar residues over residues 281–290 (NNLQTPNPTA) and 298–307 (GSTSRLSNVS). The PABPC-interacting motif-2 (PAM-2) signature appears at 284-299 (QTPNPTASEFIPKGGS). Phosphoserine occurs at positions 354 and 361. Positions 463 to 750 (QIDQADMPAV…SVNDIMPMIG (288 aa)) are pseudokinase domain. ATP-binding positions include R521, 570 to 577 (DFHAGGET), and 644 to 645 (TK). Residues 789–887 (TINERPEFQK…ELIAAANGQL (99 aa)) form a knob domain region.

This sequence belongs to the protein kinase superfamily. PAN3 family. Homodimer. Forms a heterotrimer with a catalytic subunit PAN2 to form the poly(A)-nuclease (PAN) deadenylation complex. Interacts (via PAM-2 motif) with poly(A)-binding protein PABPC1 (via PABC domain), conferring substrate specificity of the enzyme complex. Interacts with the GW182 family proteins TNRC6A, TNRC6B and TNRC6C. Interacts with YTHDF3. As to quaternary structure, interacts with PAN2. Interacts (via N-terminus) with PABPC1 at lower efficiency than isoform 3. In terms of assembly, interacts with PAN2. Interacts (via N-terminus) with PABPC1 at higher efficiency than isoform 1.

It localises to the cytoplasm. It is found in the P-body. Its subcellular location is the nucleus. Functionally, regulatory subunit of the poly(A)-nuclease (PAN) deadenylation complex, one of two cytoplasmic mRNA deadenylases involved in general and miRNA-mediated mRNA turnover. PAN specifically shortens poly(A) tails of RNA and the activity is stimulated by poly(A)-binding protein (PABP). PAN deadenylation is followed by rapid degradation of the shortened mRNA tails by the CCR4-NOT complex. Deadenylated mRNAs are then degraded by two alternative mechanisms, namely exosome-mediated 3'-5' exonucleolytic degradation, or deadenylation-dependent mRNA decapping and subsequent 5'-3' exonucleolytic degradation by XRN1. PAN3 acts as a regulator for PAN activity, recruiting the catalytic subunit PAN2 to mRNA via its interaction with RNA and PABP, and to miRNA targets via its interaction with GW182 family proteins. Its function is as follows. Decreases PAN2-mediated deadenylation, possibly by preventing progression into the second CCR4-NOT mediated stage of biphasic deadenylation. Has a significant effect on mRNA stability, generally stabilizing a subset of the transcriptome. Stabilizes mRNAs degraded by the AU-rich element (ARE)-mediated mRNA decay pathway but promotes degradation of mRNAs by the microRNA-mediated pathway. Its activity influences mRNP remodeling, specifically reducing formation of a subset of P-bodies containing GW220, an isoform of TNRC6A. In terms of biological role, enhances PAN2 deadenylase activity and has an extensive effect on mRNA stability, generally enhancing mRNA decay across the transcriptome by multiple pathways, including the AU-rich element (ARE)-mediated pathway, microRNA-mediated pathway and the nonsense-mediated pathway (NMD). Its activity is required for efficient P-body formation. May be involved in regulating mRNAs of genes involved in cell cycle progression and cell proliferation. The protein is PAN2-PAN3 deadenylation complex subunit Pan3 of Mus musculus (Mouse).